The following is a 484-amino-acid chain: Monocarboxylate transporter 2 (484 aa).

Residues Met-1–Asp-16 lie on the Cytoplasmic side of the membrane. Residues Gly-17–Phe-37 form a helical membrane-spanning segment. Topologically, residues Pro-38–Ala-60 are extracellular. The chain crosses the membrane as a helical span at residues Trp-61–Val-81. Residues Asn-82–Val-90 are Cytoplasmic-facing. A helical membrane pass occupies residues Ile-91–Ile-111. At Glu-112–Thr-116 the chain is on the extracellular side. A helical membrane pass occupies residues Val-117–Gly-137. Topologically, residues Lys-138–Gly-149 are cytoplasmic. A helical membrane pass occupies residues Cys-150 to Phe-170. Residues Asn-171–Gly-174 are Extracellular-facing. A helical transmembrane segment spans residues Trp-175–Leu-195. Residues Met-196–Gly-245 are Cytoplasmic-facing. Residues Phe-246 to Phe-266 traverse the membrane as a helical segment. Over Leu-267–Ser-281 the chain is Extracellular. A helical membrane pass occupies residues Ala-282–Ile-302. Topologically, residues Ala-303–Arg-311 are cytoplasmic. Residues Ile-312 to Leu-332 traverse the membrane as a helical segment. At Ala-333 to Ser-337 the chain is on the extracellular side. A helical membrane pass occupies residues Ala-338–Phe-358. At Glu-359 to Ser-372 the chain is on the cytoplasmic side. The chain crosses the membrane as a helical span at residues Ala-373–Gly-393. Residues Lys-394 to Leu-405 are Extracellular-facing. The chain crosses the membrane as a helical span at residues Tyr-406–Ile-426. Over Asn-427–Ile-484 the chain is Cytoplasmic. The tract at residues Glu-438–Ile-484 is disordered. 2 stretches are compositionally biased toward basic and acidic residues: residues Ala-449–Thr-465 and Pro-475–Ile-484.

This sequence belongs to the major facilitator superfamily. Monocarboxylate porter (TC 2.A.1.13) family. Homodimer. Interacts with GRID2IP. Interacts with EMB; interaction mediates SLC16A7 targeting to the plasma membrane. Interacts with isoform 2 of BSG. In terms of tissue distribution, detected in testis and in spermatozoa (at protein level).

Its subcellular location is the cell membrane. The protein localises to the cytoplasm. The protein resides in the basolateral cell membrane. The enzyme catalyses (S)-lactate(in) + H(+)(in) = (S)-lactate(out) + H(+)(out). It carries out the reaction 3-methyl-2-oxobutanoate(out) + H(+)(out) = 3-methyl-2-oxobutanoate(in) + H(+)(in). It catalyses the reaction acetoacetate(out) + H(+)(out) = acetoacetate(in) + H(+)(in). The catalysed reaction is (R)-3-hydroxybutanoate(out) + H(+)(out) = (R)-3-hydroxybutanoate(in) + H(+)(in). The enzyme catalyses 4-methyl-2-oxopentanoate(out) + H(+)(out) = 4-methyl-2-oxopentanoate(in) + H(+)(in). It carries out the reaction pyruvate(out) + H(+)(out) = pyruvate(in) + H(+)(in). It catalyses the reaction (S)-3-hydroxybutanoate(out) + H(+)(out) = (S)-3-hydroxybutanoate(in) + H(+)(in). Its activity is regulated as follows. Transport activity exhibits steep dependence on substrate concentration. Substrate concentration sensitivity of SLC16A7 arises from the strong inter-subunit cooperativity of the SLC16A7 dimer during transport. Inhibited by AR-C155858. Proton-coupled monocarboxylate symporter. Catalyzes the rapid transport across the plasma membrane of monocarboxylates such as L-lactate, pyruvate and ketone bodies, acetoacetate, beta-hydroxybutyrate and acetate. Dimerization is functionally required and both subunits work cooperatively in transporting substrate. The chain is Monocarboxylate transporter 2 (Slc16a7) from Mus musculus (Mouse).